The sequence spans 216 residues: Large ribosomal subunit protein uL4 (216 aa).

The disordered stretch occupies residues 47–77 (THKVKGMGEVSGTTKKPYRQKGTGNARQGSL).

Belongs to the universal ribosomal protein uL4 family. In terms of assembly, part of the 50S ribosomal subunit.

One of the primary rRNA binding proteins, this protein initially binds near the 5'-end of the 23S rRNA. It is important during the early stages of 50S assembly. It makes multiple contacts with different domains of the 23S rRNA in the assembled 50S subunit and ribosome. In terms of biological role, forms part of the polypeptide exit tunnel. This chain is Large ribosomal subunit protein uL4, found in Acidiphilium cryptum (strain JF-5).